An 89-amino-acid polypeptide reads, in one-letter code: Small ribosomal subunit protein uS14A (89 aa).

Belongs to the universal ribosomal protein uS14 family. As to quaternary structure, part of the 30S ribosomal subunit. Contacts proteins S3 and S10.

Binds 16S rRNA, required for the assembly of 30S particles and may also be responsible for determining the conformation of the 16S rRNA at the A site. This Ligilactobacillus salivarius (strain UCC118) (Lactobacillus salivarius) protein is Small ribosomal subunit protein uS14A.